Here is a 266-residue protein sequence, read N- to C-terminus: Glutamate racemase (266 aa).

Residues 7–8 (DS) and 39–40 (YG) each bind substrate. C70 acts as the Proton donor/acceptor in catalysis. 71–72 (NT) serves as a coordination point for substrate. C186 acts as the Proton donor/acceptor in catalysis. 187–188 (TH) serves as a coordination point for substrate.

Belongs to the aspartate/glutamate racemases family.

The enzyme catalyses L-glutamate = D-glutamate. It participates in cell wall biogenesis; peptidoglycan biosynthesis. Provides the (R)-glutamate required for cell wall biosynthesis. In Campylobacter curvus (strain 525.92), this protein is Glutamate racemase.